The following is a 156-amino-acid chain: Small ribosomal subunit protein uS7 (156 aa).

This sequence belongs to the universal ribosomal protein uS7 family. In terms of assembly, part of the 30S ribosomal subunit. Contacts proteins S9 and S11.

Functionally, one of the primary rRNA binding proteins, it binds directly to 16S rRNA where it nucleates assembly of the head domain of the 30S subunit. Is located at the subunit interface close to the decoding center, probably blocks exit of the E-site tRNA. This is Small ribosomal subunit protein uS7 from Ruegeria pomeroyi (strain ATCC 700808 / DSM 15171 / DSS-3) (Silicibacter pomeroyi).